The primary structure comprises 220 residues: Octanoyltransferase (220 aa).

In terms of domain architecture, BPL/LPL catalytic spans Glu34–Asn209. Substrate is bound by residues Arg73–His80, Ser140–Gly142, and Gly153–Ala155. The Acyl-thioester intermediate role is filled by Cys171.

It belongs to the LipB family.

It is found in the cytoplasm. It catalyses the reaction octanoyl-[ACP] + L-lysyl-[protein] = N(6)-octanoyl-L-lysyl-[protein] + holo-[ACP] + H(+). It functions in the pathway protein modification; protein lipoylation via endogenous pathway; protein N(6)-(lipoyl)lysine from octanoyl-[acyl-carrier-protein]: step 1/2. Its function is as follows. Catalyzes the transfer of endogenously produced octanoic acid from octanoyl-acyl-carrier-protein onto the lipoyl domains of lipoate-dependent enzymes. Lipoyl-ACP can also act as a substrate although octanoyl-ACP is likely to be the physiological substrate. The sequence is that of Octanoyltransferase from Shewanella piezotolerans (strain WP3 / JCM 13877).